The primary structure comprises 629 residues: MAKNIKTNKKPQQVNKKEMSKQHAKQIKQQLNETVATGIIDGVFVYTEALSIADFANQIGKSVAEILKYFFAQGLMLNQNVVLSEEQMAELALEFGFDFRKEESLTKENFFEALDASEEDKPEDLEHRAPIVTIMGHVDHGKTTLLDSIKNTNVVGGEAGGITQAIGAYQVKNKDGKKITFIDTPGHEAFSEMRSRGANVTDIVILIVAADDGVMPQTEEAIDHAKLANVPIIVFINKCDKPGADPERVKAELMKYEIVAEEYGGDIPFVQGSAKQKIGLDQLEETILLIAEMQDYKANPNKLAKGVVIEAHLDKAKGPVASILVKEGTLDIRDMIIAGTTYGNIKHMEDETNKKVLKAGPSKPVVVYGLNEVPSAGDKFIVMNDEKMARTIAEAQAEKKLAAERQSNQIFSLDSIKKHIDDGELKAINLIVKADTQGSVEALKGSLTKIDIPGVKLNIIRASVGTITLSDVTLASTVTDGIVLIYGFNVRPDAVVRKKAEEEGIEIRLHNIIYKVIEELEDAAKGMLDPEYKEVVTGSAEIRATFKHSDIGTIGGFHITDGSIERKSKVRIIRNGIVIYTGELATLKHLKDDIKEAKINSEGGLTIKNFNDIKEGDIVEGYKEEEVKK.

The segment at 1 to 20 (MAKNIKTNKKPQQVNKKEMS) is disordered. Positions 127-297 (HRAPIVTIMG…LLIAEMQDYK (171 aa)) constitute a tr-type G domain. The G1 stretch occupies residues 136-143 (GHVDHGKT). Residue 136–143 (GHVDHGKT) coordinates GTP. The segment at 161-165 (GITQA) is G2. The G3 stretch occupies residues 183-186 (DTPG). GTP contacts are provided by residues 183-187 (DTPGH) and 237-240 (NKCD). The G4 stretch occupies residues 237–240 (NKCD). Residues 273–275 (SAK) are G5.

This sequence belongs to the TRAFAC class translation factor GTPase superfamily. Classic translation factor GTPase family. IF-2 subfamily.

The protein resides in the cytoplasm. Its function is as follows. One of the essential components for the initiation of protein synthesis. Protects formylmethionyl-tRNA from spontaneous hydrolysis and promotes its binding to the 30S ribosomal subunits. Also involved in the hydrolysis of GTP during the formation of the 70S ribosomal complex. This is Translation initiation factor IF-2 from Mesoplasma florum (strain ATCC 33453 / NBRC 100688 / NCTC 11704 / L1) (Acholeplasma florum).